The following is a 512-amino-acid chain: Endo-1,4-beta-xylanase A (512 aa).

Residues 1–30 (MKRKVKKMAAMATSIIMAIMIILHSIPVLA) form the signal peptide. One can recognise a GH11 domain in the interval 33 to 228 (IIYDNETGTH…SSGYANVYKN (196 aa)). Glu124 serves as the catalytic Nucleophile. The active-site Proton donor is Glu215. CBM6 domains follow at residues 251-371 (SIIE…FIFS) and 388-508 (SIIQ…FVFS). Ca(2+) contacts are provided by Glu254 and Glu256. Position 271 (Thr271) interacts with D-xylotriose. Arg276 lines the Ca(2+) pocket. Copy 1 of the repeat occupies 279 to 340 (GYIENGNTVT…SSTGSWNTYQ (62 aa)). The 2 X 61 AA approximate repeats stretch occupies residues 279-477 (GYIENGNTVT…GSTGSFDTYR (199 aa)). 3 residues coordinate D-xylotriose: Tyr280, Asn337, and Asn364. Tyr280, Asn337, and Asn364 together coordinate D-xylobiose. Residues Asp366, Gln391, Glu393, and Ser413 each contribute to the Ca(2+) site. Copy 2 of the repeat occupies 416 to 477 (GYIENGYSTT…GSTGSFDTYR (62 aa)). D-xylotriose-binding residues include Tyr417, Asp474, and Asn501. Asp503 contributes to the Ca(2+) binding site.

The protein belongs to the glycosyl hydrolase 11 (cellulase G) family.

It carries out the reaction Endohydrolysis of (1-&gt;4)-beta-D-xylosidic linkages in xylans.. The protein operates within glycan degradation; xylan degradation. The chain is Endo-1,4-beta-xylanase A (xynA) from Thermoclostridium stercorarium (Clostridium stercorarium).